Consider the following 186-residue polypeptide: Testis-expressed protein 36 (186 aa).

The disordered stretch occupies residues Met-1 to Leu-52. The segment covering Thr-24 to Pro-39 has biased composition (polar residues).

This is Testis-expressed protein 36 (TEX36) from Homo sapiens (Human).